A 213-amino-acid chain; its full sequence is ATP phosphoribosyltransferase (213 aa).

Belongs to the ATP phosphoribosyltransferase family. Short subfamily. In terms of assembly, heteromultimer composed of HisG and HisZ subunits.

The protein localises to the cytoplasm. It catalyses the reaction 1-(5-phospho-beta-D-ribosyl)-ATP + diphosphate = 5-phospho-alpha-D-ribose 1-diphosphate + ATP. The protein operates within amino-acid biosynthesis; L-histidine biosynthesis; L-histidine from 5-phospho-alpha-D-ribose 1-diphosphate: step 1/9. In terms of biological role, catalyzes the condensation of ATP and 5-phosphoribose 1-diphosphate to form N'-(5'-phosphoribosyl)-ATP (PR-ATP). Has a crucial role in the pathway because the rate of histidine biosynthesis seems to be controlled primarily by regulation of HisG enzymatic activity. The sequence is that of ATP phosphoribosyltransferase from Nitrosococcus oceani (strain ATCC 19707 / BCRC 17464 / JCM 30415 / NCIMB 11848 / C-107).